The primary structure comprises 110 residues: Phosphoribosyl-ATP pyrophosphatase (110 aa).

It belongs to the PRA-PH family.

It localises to the cytoplasm. The enzyme catalyses 1-(5-phospho-beta-D-ribosyl)-ATP + H2O = 1-(5-phospho-beta-D-ribosyl)-5'-AMP + diphosphate + H(+). It functions in the pathway amino-acid biosynthesis; L-histidine biosynthesis; L-histidine from 5-phospho-alpha-D-ribose 1-diphosphate: step 2/9. The polypeptide is Phosphoribosyl-ATP pyrophosphatase (Teredinibacter turnerae (strain ATCC 39867 / T7901)).